A 390-amino-acid polypeptide reads, in one-letter code: Purine permease 21 (390 aa).

The interval 12-34 is disordered; the sequence is QQGKEPIPTDQDERSSVSGSQTK. The next 10 helical transmembrane spans lie at 44–64, 78–98, 118–138, 140–160, 169–189, 204–224, 241–261, 287–307, 312–332, and 336–356; these read WLRV…ATIL, LATV…LLSV, LVYI…SIGL, YLPV…TAFF, LTPI…LLAF, YVKG…LLSL, VINM…VGLF, LVWT…LIFE, FSNA…VIIF, and MNGL…SYVY. The disordered stretch occupies residues 367 to 390; that stretch reads KSNEIPTTESPDRPEAEGSSEQSK.

This sequence belongs to the purine permeases (TC 2.A.7.14) family. In terms of tissue distribution, expressed in mesophyll cells.

Its subcellular location is the membrane. The polypeptide is Purine permease 21 (Arabidopsis thaliana (Mouse-ear cress)).